An 848-amino-acid polypeptide reads, in one-letter code: Protein translocase subunit SecA (848 aa).

Residues Gln86, 104 to 108 (GEGKT), and Asp508 each bind ATP. Zn(2+) contacts are provided by Cys833, Cys835, Cys844, and Cys845.

Belongs to the SecA family. As to quaternary structure, monomer and homodimer. Part of the essential Sec protein translocation apparatus which comprises SecA, SecYEG and auxiliary proteins SecDF. Other proteins may also be involved. Zn(2+) is required as a cofactor.

Its subcellular location is the cell membrane. It is found in the cytoplasm. The catalysed reaction is ATP + H2O + cellular proteinSide 1 = ADP + phosphate + cellular proteinSide 2.. Its function is as follows. Part of the Sec protein translocase complex. Interacts with the SecYEG preprotein conducting channel. Has a central role in coupling the hydrolysis of ATP to the transfer of proteins into and across the cell membrane, serving as an ATP-driven molecular motor driving the stepwise translocation of polypeptide chains across the membrane. This Caldicellulosiruptor saccharolyticus (strain ATCC 43494 / DSM 8903 / Tp8T 6331) protein is Protein translocase subunit SecA.